The primary structure comprises 236 residues: Lipid A 4'-phosphatase (236 aa).

The next 5 membrane-spanning stretches (helical) occupy residues 26 to 46 (FFYLISAKWTWVIMSIAFLFF), 58 to 78 (FIVGAVLLSVLICDQLSSSFF), 134 to 153 (YTWTIWSVVALVIYSRIYIG), 160 to 182 (IIPGIAVGLIVGHFVYKVYLYAR), and 200 to 220 (GDSIRLWTLSLIGFVFAMLCM).

The protein belongs to the lipid A LpxF 4'-phosphatase family.

It localises to the cell inner membrane. It participates in bacterial outer membrane biogenesis; LPS lipid A biosynthesis. In terms of biological role, removes the 4'-phosphate group from lipid A species. Absence of phosphate groups in lipid A renders the bacteria resistant to host-derived cationic antimicrobial peptides (CAMP) and allows it to camouflage itself from the host innate immune response. Removal of the 4'-phosphate may be required to generate the substrate for deacylation of the pentaacyl lipid A to the tetraccylated lipid A species. The sequence is that of Lipid A 4'-phosphatase from Porphyromonas gingivalis (strain ATCC 33277 / DSM 20709 / CIP 103683 / JCM 12257 / NCTC 11834 / 2561).